Here is a 604-residue protein sequence, read N- to C-terminus: 3-hydroxy-3-methylglutaryl-coenzyme A reductase 2 (604 aa).

2 helical membrane-spanning segments follow: residues Leu47–Leu67 and Ala91–Val111. Positions Gln112 to Glu188 are linker. Residue Asn120 is glycosylated (N-linked (GlcNAc...) asparagine). The interval Glu189–Ser604 is catalytic. Glu283 acts as the Charge relay system in catalysis. Asn347 is a glycosylation site (N-linked (GlcNAc...) asparagine). The active-site Charge relay system is Lys415. Asn460 carries N-linked (GlcNAc...) asparagine glycosylation. Asp491 (charge relay system) is an active-site residue. His589 (proton donor) is an active-site residue. The N-linked (GlcNAc...) asparagine glycan is linked to Asn593.

It belongs to the HMG-CoA reductase family.

The protein localises to the endoplasmic reticulum membrane. It catalyses the reaction (R)-mevalonate + 2 NADP(+) + CoA = (3S)-3-hydroxy-3-methylglutaryl-CoA + 2 NADPH + 2 H(+). Its pathway is metabolic intermediate biosynthesis; (R)-mevalonate biosynthesis; (R)-mevalonate from acetyl-CoA: step 3/3. In terms of biological role, catalyzes the synthesis of mevalonate. The specific precursor of all isoprenoid compounds present in plants. The protein is 3-hydroxy-3-methylglutaryl-coenzyme A reductase 2 (HMGR2) of Capsicum annuum (Capsicum pepper).